A 127-amino-acid polypeptide reads, in one-letter code: RxLR effector protein CRE6 (127 aa).

The signal sequence occupies residues 1 to 19; that stretch reads MIRNALLVLVFVLIGTISA. Residues 48–67 carry the RxLR-dEER motif; it reads RLLRQGSVKEGGVHDATEER.

The protein belongs to the RxLR effector family.

The protein resides in the secreted. It localises to the host cell. In terms of biological role, effector that is involved in host plant infection. Contributes to virulence during the early infection stage, by inhibiting plant defense responses induced by both PAMP-triggered immunity (PTI) and effector-triggered immunity (ETI). This Phytophthora infestans (strain T30-4) (Potato late blight agent) protein is RxLR effector protein CRE6.